Here is a 352-residue protein sequence, read N- to C-terminus: Thiosulfate transporter TsuA (352 aa).

Residues 1-21 form a helical membrane-spanning segment; it reads MFSMILSGLICGALLGFVMQR. The Cytoplasmic segment spans residues 22–44; the sequence is GRFCLTGGFRDMYIVKNNRMFYA. Residues 45–65 traverse the membrane as a helical segment; it reads LLIAISVQSVGVFALIQAGLL. At 66-70 the chain is on the periplasmic side; the sequence is TYEAG. Residues 71-91 traverse the membrane as a helical segment; the sequence is AFPWLGTVIGGYIFGLGIVLA. At 92–102 the chain is on the cytoplasmic side; that stretch reads GGCATGTWYRA. The helical transmembrane segment at 103–123 threads the bilayer; it reads GEGLIGSWIALFTYMVMSAVM. Residues 124–148 lie on the Periplasmic side of the membrane; that stretch reads RSPHASGLNQTLQHYSTEHNSIAET. The helical transmembrane segment at 149-169 threads the bilayer; the sequence is FNLSVWPLVAVLLVITLWVVM. Residues 170–197 are Cytoplasmic-facing; sequence KELKKPKLKVATLPPRRTGIAHILFEKR. The helical transmembrane segment at 198–218 threads the bilayer; that stretch reads WHPFVTAVLIGLIALLAWPLS. The Periplasmic segment spans residues 219-247; sequence EATGRMFGLGITSPTANILQFLVAGDMKY. A helical membrane pass occupies residues 248–268; sequence INWGVFLVLGIFVGSFIAAKA. Over 269–289 the chain is Cytoplasmic; it reads SREFRVRAADAQTTLRSGLGG. The chain crosses the membrane as a helical span at residues 290-310; sequence VLMGFGASIAGGCSIGNGLVM. At 311–317 the chain is on the periplasmic side; it reads TAMMTWQ. Residues 318–338 form a helical membrane-spanning segment; that stretch reads GWIGLVFMILGVWTASWLVYV. Over 339–352 the chain is Cytoplasmic; it reads RPQRKARLATAAAN.

The protein belongs to the TsuA/YedE (TC 9.B.102) family.

It localises to the cell inner membrane. It catalyses the reaction thiosulfate(in) = thiosulfate(out). In terms of biological role, mediates thiosulfate uptake. The sequence is that of Thiosulfate transporter TsuA from Escherichia coli (strain K12).